The primary structure comprises 126 residues: Large-conductance mechanosensitive channel (126 aa).

The next 2 membrane-spanning stretches (helical) occupy residues 14 to 34 (VIDL…VNSL) and 66 to 86 (FITT…LVVV).

The protein belongs to the MscL family. In terms of assembly, homopentamer.

The protein resides in the cell membrane. Functionally, channel that opens in response to stretch forces in the membrane lipid bilayer. May participate in the regulation of osmotic pressure changes within the cell. The sequence is that of Large-conductance mechanosensitive channel from Roseiflexus sp. (strain RS-1).